Here is a 316-residue protein sequence, read N- to C-terminus: Olfactory receptor 4N4C (316 aa).

At 1–26 the chain is on the cytoplasmic side; the sequence is MKIANNTVVTEFILLGLTQSQDIQLL. Residues 27–47 form a helical membrane-spanning segment; the sequence is VFVLILIFYLIILPGNFLIIF. At 48-56 the chain is on the extracellular side; it reads TIRSDPGLT. Residues 57–77 form a helical membrane-spanning segment; sequence APLYLFLGNLAFLDASYSFIV. Residues 78 to 99 are Cytoplasmic-facing; it reads APRMLVDFLSEKKVISYRGCIT. Cysteines 97 and 179 form a disulfide. The helical transmembrane segment at 100-120 threads the bilayer; sequence QLFFLHFLGGGEGLLLVVMAF. The Extracellular portion of the chain corresponds to 121 to 143; it reads DRYIAICRPLHCSTVMNPRACYA. The helical transmembrane segment at 144–164 threads the bilayer; that stretch reads MMLALWLGGFVHSIIQVVLIL. At 165-204 the chain is on the cytoplasmic side; it reads RLPFCGPNQLDNFFCDVRQVIKLACTDMFVVELLMVFNSG. The chain crosses the membrane as a helical span at residues 205–225; the sequence is LMTLLCFLGLLASYAVILCHV. Residues 226–243 lie on the Extracellular side of the membrane; it reads RRAASEGKNKAMSTCTTR. Residues 244–264 form a helical membrane-spanning segment; sequence VIIILLMFGPAIFIYICPFRA. The Cytoplasmic segment spans residues 265–268; the sequence is LPAD. The chain crosses the membrane as a helical span at residues 269-289; that stretch reads KMVSLFHTVIFPLMNPMIYTL. The Extracellular portion of the chain corresponds to 290 to 316; that stretch reads RNQEVKTSMKRLLSRHVVCQVDFIIRN.

Belongs to the G-protein coupled receptor 1 family.

It is found in the membrane. Functionally, odorant receptor. This chain is Olfactory receptor 4N4C, found in Homo sapiens (Human).